The sequence spans 343 residues: MSAFTPASEVLLRHSDDLEQSRILFAGDLQDDLPARLDTAASRAHTQQFHHWQVLSCQMGDNARFSLVATANDVADCDTLIYYWPKNKPEAQFQLMNLLSLLPVGTDIFVVGENRSGVRSAEQMLADYAPLNKVDSARRCGLYFGRLEKQPVFDADKFWGEYSVDGLTVKTLPGVFSRDGLDVGSQLLLSTLTPHTKGKVLDVGCGAGVLSVAFARHSPKIRLTLCDVSAPAVEASRATLAANGVESEVFASNVFSEVKGCFDMIISNPPFHDGMQTSLDAAQTLIRGAVRHLNSGGELRIVANAFLPYPDVLDETFGFHEVIAQTGRFKVYRAIMTRQAKKG.

This sequence belongs to the methyltransferase superfamily. RsmC family. Monomer.

It localises to the cytoplasm. The catalysed reaction is guanosine(1207) in 16S rRNA + S-adenosyl-L-methionine = N(2)-methylguanosine(1207) in 16S rRNA + S-adenosyl-L-homocysteine + H(+). In terms of biological role, specifically methylates the guanine in position 1207 of 16S rRNA in the 30S particle. The protein is Ribosomal RNA small subunit methyltransferase C of Shigella flexneri serotype 5b (strain 8401).